The chain runs to 350 residues: D-alanine--D-alanine ligase (350 aa).

Residues 143-344 enclose the ATP-grasp domain; the sequence is KRILSTFGIS…FKSLINKLIL (202 aa). 172-227 serves as a coordination point for ATP; it reads INNIKFPCCIKPSNQGSSFGVNVANDFISLKESIDVAFLYSKKILIEPFIQGREIE. 3 residues coordinate Mg(2+): D298, E311, and N313.

Belongs to the D-alanine--D-alanine ligase family. It depends on Mg(2+) as a cofactor. Requires Mn(2+) as cofactor.

Its subcellular location is the cytoplasm. The enzyme catalyses 2 D-alanine + ATP = D-alanyl-D-alanine + ADP + phosphate + H(+). Its pathway is cell wall biogenesis; peptidoglycan biosynthesis. Functionally, cell wall formation. The polypeptide is D-alanine--D-alanine ligase (Wigglesworthia glossinidia brevipalpis).